A 539-amino-acid polypeptide reads, in one-letter code: Carotene epsilon-monooxygenase, chloroplastic (539 aa).

The transit peptide at 1 to 36 (MESSLFSPSSSSYSSLFTAKPTRLLSPKPKFTFSIR) directs the protein to the chloroplast. C487 contacts heme.

This sequence belongs to the cytochrome P450 family. It depends on heme as a cofactor.

It localises to the plastid. The protein localises to the chloroplast. It catalyses the reaction alpha-carotene + reduced [NADPH--hemoprotein reductase] + O2 = alpha-cryptoxanthin + oxidized [NADPH--hemoprotein reductase] + H2O + H(+). The catalysed reaction is zeinoxanthin + reduced [NADPH--hemoprotein reductase] + O2 = lutein + oxidized [NADPH--hemoprotein reductase] + H2O + H(+). In terms of biological role, heme-containing cytochrome P450 involved in the biosynthesis of xanthophylls. Specific for epsilon- and beta-ring hydroxylation of alpha-carotene. Has only a low activity toward the beta-rings of beta-carotene. The preferred substrate in planta is not alpha-carotene but the epsilon-ring of zeinoxanthin. Possesses a major beta-carotene hydroxylase activity in planta when depleted in its preferred substrate alpha-carotene. This is Carotene epsilon-monooxygenase, chloroplastic (CYP97C1) from Arabidopsis thaliana (Mouse-ear cress).